A 444-amino-acid polypeptide reads, in one-letter code: Chromosome partition protein MukF (444 aa).

The leucine-zipper stretch occupies residues 211 to 239; that stretch reads LDETSGNLRELQDTLNAAGDKLQAQLLRI.

Belongs to the MukF family. Interacts, and probably forms a ternary complex, with MukE and MukB via its C-terminal region. The complex formation is stimulated by calcium or magnesium. It is required for an interaction between MukE and MukB.

Its subcellular location is the cytoplasm. The protein resides in the nucleoid. Involved in chromosome condensation, segregation and cell cycle progression. May participate in facilitating chromosome segregation by condensation DNA from both sides of a centrally located replisome during cell division. Not required for mini-F plasmid partitioning. Probably acts via its interaction with MukB and MukE. Overexpression results in anucleate cells. It has a calcium binding activity. This Actinobacillus succinogenes (strain ATCC 55618 / DSM 22257 / CCUG 43843 / 130Z) protein is Chromosome partition protein MukF.